A 483-amino-acid chain; its full sequence is Betaine aldehyde dehydrogenase (483 aa).

K(+) is bound by residues Ile27 and Asp93. 149-151 is a binding site for NAD(+); that stretch reads GAW. Lys161 serves as the catalytic Charge relay system. Residue 175–178 coordinates NAD(+); the sequence is KPSE. Position 179 (Val179) interacts with K(+). NAD(+) is bound at residue 228–231; it reads SVPT. Residue Val243 coordinates K(+). The Proton acceptor role is filled by Glu249. NAD(+) is bound by residues Gly251, Cys283, and Glu380. Cys283 (nucleophile) is an active-site residue. Cys283 is subject to Cysteine sulfenic acid (-SOH). The K(+) site is built by Lys450 and Gly453. Glu457 (charge relay system) is an active-site residue.

The protein belongs to the aldehyde dehydrogenase family. Dimer of dimers. It depends on K(+) as a cofactor.

The catalysed reaction is betaine aldehyde + NAD(+) + H2O = glycine betaine + NADH + 2 H(+). The protein operates within amine and polyamine biosynthesis; betaine biosynthesis via choline pathway; betaine from betaine aldehyde: step 1/1. Involved in the biosynthesis of the osmoprotectant glycine betaine. Catalyzes the irreversible oxidation of betaine aldehyde to the corresponding acid. This is Betaine aldehyde dehydrogenase from Cereibacter sphaeroides (strain KD131 / KCTC 12085) (Rhodobacter sphaeroides).